A 236-amino-acid chain; its full sequence is Regulatory protein cys-3 (236 aa).

Residues T26–R89 form a disordered region. A compositionally biased stretch (polar residues) spans G28–P37. The bZIP domain maps to L99–K162. The basic motif stretch occupies residues K105–K137. The leucine-zipper stretch occupies residues L141 to L155. A disordered region spans residues A189–D236. The span at D193–S211 shows a compositional bias: basic and acidic residues. A compositionally biased stretch (low complexity) spans S212–D223.

Belongs to the bZIP family. GCN4 subfamily. Binds DNA as a dimer.

It is found in the nucleus. Turns on the expression of structural genes which encode sulfur-catabolic enzymes. Binds to sequence elements upstream of these genes. This is Regulatory protein cys-3 (cys-3) from Neurospora crassa (strain ATCC 24698 / 74-OR23-1A / CBS 708.71 / DSM 1257 / FGSC 987).